Here is a 488-residue protein sequence, read N- to C-terminus: Surface lipoprotein assembly modifier 1 (488 aa).

Positions 1–31 (MVIFYFCGKTFMPARNRWMLLLPLLASAAYA) are cleaved as a signal peptide. Residues 32-202 (EETPREPDLR…LYRKALRERD (171 aa)) form an N-terminal domain region. TPR repeat units follow at residues 118 to 151 (MLAL…QPDA) and 171 to 204 (AADQ…RDAW). A C-terminal probable beta barrel, partially restores export of lipoproteins region spans residues 203–488 (AWKVNGGFSV…RAFVEFNKTF (286 aa)). The next 14 membrane-spanning stretches (beta stranded) occupy residues 204 to 214 (WKVNGGFSVTR), 241 to 252 (VNYRLGAEKKWS), 257 to 267 (WYTTAGGDVSG), 280 to 291 (TAGVSGGIGFAD), 294 to 304 (KDAGLAVFHER), 316 to 325 (NGARLYFNRW), 330 to 340 (WQTLSSAEWGR), 354 to 364 (LQISNSLVFYR), 368 to 377 (QYWMGGLDFY), 393 to 402 (GLRFAWGQEW), 407 to 417 (LSSLLRLGAAK), 439 to 448 (LNTSLSLWHR), 455 to 464 (ITPRLTLSHR), and 478 to 488 (NRAFVEFNKTF).

This sequence belongs to the Slam family. Interacts with the C-terminal domain of surface lipoprotein TbpB.

Its subcellular location is the cell outer membrane. Its function is as follows. Required for correct export to the cell surface of some cell outer membrane lipoproteins both in Neisseria and heterologously in E.coli. The sequence is that of Surface lipoprotein assembly modifier 1 from Neisseria meningitidis serogroup B (strain ATCC BAA-335 / MC58).